A 330-amino-acid chain; its full sequence is Glucosyltransferase 3 (330 aa).

Position 16 (Thr-16) interacts with UDP. The interval 106–111 (MFSGNF) is substrate protein-binding loop. Residues Arg-179, 211-214 (YRPD), and 244-249 (SYKLGS) contribute to the UDP site.

Belongs to the Gtf3 glucosyltransferase family. As to quaternary structure, homotetramer; a dimer of dimers. The cofactor is In vitro glycosyltransferase activity is metal-independent..

The protein operates within protein modification; protein glycosylation. In terms of biological role, required for polymorphic O-glycosylation of the serine-rich repeat protein Fap1. Catalyzes the second step in glycosylation of the serine-rich repeat protein in this bacteria. Transfers glucose from UDP-glucose to the terminal GlcNAc moiety of 3-O-(N-acetyl-alpha-D-glucosaminyl)-L-seryl-[protein] which results from the first glycosylation step of Fap1; does not use other sugar nucleotides as substrates. The polypeptide is Glucosyltransferase 3 (Streptococcus parasanguinis).